Consider the following 1103-residue polypeptide: Retinal guanylyl cyclase 2 (1103 aa).

The signal sequence occupies residues 1-46; it reads MFLAPWPFSHLMLWFVTLGRQRGQHGLASFKLLWCLWLLVLMSLPL. Residues 47–465 lie on the Extracellular side of the membrane; the sequence is QVWAPPYKIG…DGRICQGGIN (419 aa). Cys-104 and Cys-132 form a disulfide bridge. A helical transmembrane segment spans residues 466-490; sequence PTFALMVCLALLIALLSINGFAYFI. Topologically, residues 491-1103 are cytoplasmic; that stretch reads RHRINKIQLI…FQRRKQKSSW (613 aa). The Protein kinase domain maps to 532 to 812; it reads FQITSEVQSG…DEIFNQFKTF (281 aa). One can recognise a Guanylate cyclase domain in the interval 884-1014; the sequence is TLYFSDIVGF…DTVNTASRME (131 aa).

It belongs to the adenylyl cyclase class-4/guanylyl cyclase family. As to quaternary structure, homodimer. Interacts with RD3; promotes the exit of GUCY2F from the endoplasmic reticulum and its trafficking to the photoreceptor outer segments. In terms of processing, there are 9 conserved cysteine residues in sensory guanylate cyclases, 6 in the extracellular domain, which may be involved in intra- or interchain disulfide bonds. As to expression, expressed specifically in retina.

It is found in the membrane. The protein resides in the photoreceptor outer segment membrane. It carries out the reaction GTP = 3',5'-cyclic GMP + diphosphate. Activated by GUCA1B when free calcium ions concentration is low, and inhibited by GUCA1B when free calcium ions concentration is high. Inhibited by RD3. Responsible for the synthesis of cyclic GMP (cGMP) in rods and cones of photoreceptors. Plays an essential role in phototransduction, by mediating cGMP replenishment. May also participate in the trafficking of membrane-asociated proteins to the photoreceptor outer segment membrane. The sequence is that of Retinal guanylyl cyclase 2 (GUCY2F) from Bos taurus (Bovine).